A 600-amino-acid chain; its full sequence is Estrogen receptor (600 aa).

The segment at M1–Y189 is modulating (transactivation AF-1); mediates interaction with MACROD1. The O-linked (GlcNAc) serine glycan is linked to S10. Residues M35–S47 are required for interaction with NCOA1. An interaction with DDX5; self-association region spans residues M35–M179. S109 and S111 each carry phosphoserine; by CDK2. S123 carries the phosphoserine modification. The tract at residues D148 to G177 is disordered. A compositionally biased stretch (basic and acidic residues) spans S159–L170. Phosphoserine; by CK2 is present on S172. 2 consecutive NR C4-type zinc fingers follow at residues C190–C210 and C226–C250. Residues C190 to M255 constitute a DNA-binding region (nuclear receptor). The tract at residues C190 to L315 is mediates interaction with DNTTIP2. The tract at residues M256–L315 is hinge. Residue R265 is modified to Asymmetric dimethylarginine; by PRMT1. Positions G267 to I600 are interaction with AKAP13. Residues M269 to I600 are self-association. An NR LBD domain is found at T316 to H552. Positions T316–I600 are transactivation AF-2. 17beta-estradiol is bound by residues E358 and R399. C452 carries the S-palmitoyl cysteine lipid modification. H529 is a 17beta-estradiol binding site. Y542 carries the phosphotyrosine; by Tyr-kinases modification. The tract at residues A558–A581 is disordered. The span at S569–A581 shows a compositional bias: low complexity. A glycan (O-linked (GlcNAc) threonine) is linked at T576.

Belongs to the nuclear hormone receptor family. NR3 subfamily. In terms of assembly, interacts with BCAS3. Binds DNA as a homodimer. Can form a heterodimer with ESR2. Interacts with coactivator NCOA5. Interacts with PELP1, the interaction is enhanced by 17-beta-estradiol; the interaction increases ESR1 transcriptional activity. Interacts with NCOA7; the interaction is ligand-inducible. Interacts with AKAP13, CUEDC2, HEXIM1, KDM5A, MAP1S, SMARD1, and UBE1C. Interacts with MUC1; the interaction is stimulated by 7 beta-estradiol (E2) and enhances ESR1-mediated transcription. Interacts with DNTTIP2, and UIMC1. Interacts with KMT2D/MLL2. Interacts with ATAD2; the interaction is enhanced by estradiol. Interacts with KIF18A and LDB1. Interacts with RLIM (via its C-terminus). Interacts with MACROD1. Interacts with SH2D4A and PLCG. Interacts with SH2D4A; the interaction blocks binding to PLCG and inhibits estrogen-induced cell proliferation. Interacts with DYNLL1. Interacts with CCDC62; the interaction requires estradiol and appears to enhance the transcription of target genes. Interacts with NR2C1; the interaction prevents homodimerization of ESR1 and suppresses its transcriptional activity and cell growth. Interacts with DNAAF4. Interacts with PRMT2. Interacts with RBFOX2. Interacts with EP300; the interaction is estrogen-dependent and enhanced by CITED1. Interacts with CITED1; the interaction is estrogen-dependent. Interacts with FAM120B, FOXL2, PHB2 and SLC30A9. Interacts with coactivators NCOA3 and NCOA6. Interacts with STK3/MST2 only in the presence of SAV1 and vice-versa. Binds to CSNK1D. Interacts with NCOA2; NCOA2 can interact with ESR1 AF-1 and AF-2 domains simultaneously and mediate their transcriptional synergy. Interacts with DDX5. Interacts with NCOA1; the interaction seems to require a self-association of N-terminal and C-terminal regions. Interacts with ZNF366, DDX17, NFKB1, RELA, SP1 and SP3. Interacts with NRIP1. Interacts with GPER1; the interaction occurs in an estrogen-dependent manner. Interacts with TRIP4 (ufmylated); estrogen dependent. Interacts with LMTK3; the interaction phosphorylates ESR1 (in vitro) and protects it against proteasomal degradation. Interacts with CCAR2 (via N-terminus) in a ligand-independent manner. Interacts with ZFHX3. Interacts with SFR1 in a ligand-dependent and -independent manner. Interacts with DCAF13, LATS1 and DCAF1; regulates ESR1 ubiquitination and ubiquitin-mediated proteasomal degradation. Interacts (via DNA-binding domain) with POU4F2 (C-terminus); this interaction increases the estrogen receptor ESR1 transcriptional activity in a DNA- and ligand 17-beta-estradiol-independent manner. Interacts with ESRRB isoform 1. Interacts with UBE3A and WBP2. Interacts with GTF2B. Interacts with RBM39. In the absence of hormonal ligand, interacts with TACC1. Interacts with PI3KR1 or PI3KR2 and PTK2/FAK1. Interacts with SRC. Interacts with BAG1; the interaction is promoted in the absence of estradiol (17-beta-estradiol/E2). Interacts with and ubiquitinated by STUB1; the interaction is promoted in the absence of estradiol (17-beta-estradiol/E2). Interacts with NEDD8. In terms of processing, phosphorylated by cyclin A/CDK2 and CK1. Phosphorylation probably enhances transcriptional activity. Dephosphorylation at Ser-123 by PPP5C inhibits its transactivation activity. Phosphorylated by LMTK3 (in vitro). Ubiquitinated; regulated by LATS1 via DCAF1 it leads to ESR1 proteasomal degradation. Deubiquitinated by OTUB1. Ubiquitinated by STUB1/CHIP; in the CA1 hippocampal region following loss of endogenous circulating estradiol (17-beta-estradiol/E2). Ubiquitinated by UBR5, leading to its degradation: UBR5 specifically recognizes and binds ligand-bound ESR1 when it is not associated with coactivators (NCOAs). In presence of NCOAs, the UBR5-degron is not accessible, preventing its ubiquitination and degradation. Post-translationally, palmitoylated at Cys-452 by ZDHHC7 and ZDHHC21. This modification is required for plasma membrane targeting and for rapid intracellular signaling via ERK and AKT kinases and cAMP generation, but not for signaling mediated by the nuclear hormone receptor. In terms of processing, dimethylated by PRMT1 at Arg-265. The methylation may favor cytoplasmic localization. Demethylated by JMJD6 at Arg-265. Expressed in the CA1 region of the hippocampus, expression decreases with age (at protein level). Expressed in the uterus (at protein level).

The protein resides in the nucleus. The protein localises to the cytoplasm. It is found in the golgi apparatus. Its subcellular location is the cell membrane. Its function is as follows. Nuclear hormone receptor. The steroid hormones and their receptors are involved in the regulation of eukaryotic gene expression and affect cellular proliferation and differentiation in target tissues. Ligand-dependent nuclear transactivation involves either direct homodimer binding to a palindromic estrogen response element (ERE) sequence or association with other DNA-binding transcription factors, such as AP-1/c-Jun, c-Fos, ATF-2, Sp1 and Sp3, to mediate ERE-independent signaling. Ligand binding induces a conformational change allowing subsequent or combinatorial association with multiprotein coactivator complexes through LXXLL motifs of their respective components. Mutual transrepression occurs between the estrogen receptor (ER) and NF-kappa-B in a cell-type specific manner. Decreases NF-kappa-B DNA-binding activity and inhibits NF-kappa-B-mediated transcription from the IL6 promoter and displace RELA/p65 and associated coregulators from the promoter. Recruited to the NF-kappa-B response element of the CCL2 and IL8 promoters and can displace CREBBP. Present with NF-kappa-B components RELA/p65 and NFKB1/p50 on ERE sequences. Can also act synergistically with NF-kappa-B to activate transcription involving respective recruitment adjacent response elements; the function involves CREBBP. Can activate the transcriptional activity of TFF1. Also mediates membrane-initiated estrogen signaling involving various kinase cascades. Essential for MTA1-mediated transcriptional regulation of BRCA1 and BCAS3. Maintains neuronal survival in response to ischemic reperfusion injury when in the presence of circulating estradiol (17-beta-estradiol/E2). The protein is Estrogen receptor (Esr1) of Rattus norvegicus (Rat).